A 174-amino-acid chain; its full sequence is MGRIIFYEDKNFQGRRYECDSDCSDFHAFLNRCNSIRVESGAWVIYERPNFMGYQYVLTRGEYPDYQRWMGLNDRLCSCKMIHFVSGSEYKIQLYDKGDFTGQVYESTEDCPSVVDRFRTREVHSCKVLDGIWIFYEHPNYRGRQYLLEKGEYRKPVDWGAVCPTVQSFKRLME.

Beta/gamma crystallin 'Greek key' domains are found at residues 2–40 and 41–83; these read GRII…RVES and GAWV…KMIH. The segment at 84 to 89 is connecting peptide; the sequence is FVSGSE. 2 Beta/gamma crystallin 'Greek key' domains span residues 90–130 and 131–173; these read YKIQ…KVLD and GIWI…KRLM.

The protein belongs to the beta/gamma-crystallin family.

Functionally, crystallins are the dominant structural components of the vertebrate eye lens. This Cyprinus carpio (Common carp) protein is Gamma-crystallin S (crygs).